The sequence spans 415 residues: MESCARRCAVSGLTALSMRLTKQLSAAAASKAGAAGNLVFSPLSIYSVLSVVTAGARGRTLTELLGALGAESREKLAANAGEMARALPAPGGGAAQPGGGPRVAHACGVWHERTRTVRPAFRDAAAASFNAAALAVDFLNNPEEARKEINSWVAAATENLIDTILPPGSVSTDTGLVVTSAIYFNGQWWTPFCKEITEKRAFHRLDGGDVEADFMRSGEDQYIAVHDGFKVLKMPYAACVSARTTTTPRYSMYVFLPDERDGLWSLEDRMAAGGEGFLREHTPERRVEVGEFRIPRFKLSFDDSVVGALQRLGVRDVFKPFVADLADVLEAENSGDDPPLFVSDVKHKAVIEVNEEGTEAAAATAVCLTFASAAPSSRRPARVDFVADHPFAFLVLEESSGAVLFAGHVVDPTDE.

Residues 357-381 are RCL; sequence GTEAAAATAVCLTFASAAPSSRRPA.

This sequence belongs to the serpin family.

Its function is as follows. Probable serine protease inhibitor. In Oryza sativa subsp. japonica (Rice), this protein is Putative serpin-Z6C.